The primary structure comprises 451 residues: uncharacterized protein (451 aa).

Mn(2+)-binding residues include Asp-305, Asp-316, His-384, Glu-414, and Glu-428.

The protein belongs to the peptidase M24B family. It depends on Mn(2+) as a cofactor.

This is an uncharacterized protein from Schizosaccharomyces pombe (strain 972 / ATCC 24843) (Fission yeast).